Consider the following 285-residue polypeptide: Acetylglutamate kinase (285 aa).

Substrate-binding positions include Gly64 to Gly65, Arg86, and Asn179.

The protein belongs to the acetylglutamate kinase family. ArgB subfamily.

The protein resides in the plastid. Its subcellular location is the chloroplast. It catalyses the reaction N-acetyl-L-glutamate + ATP = N-acetyl-L-glutamyl 5-phosphate + ADP. The protein operates within amino-acid biosynthesis; L-arginine biosynthesis; N(2)-acetyl-L-ornithine from L-glutamate: step 2/4. Functionally, catalyzes the ATP-dependent phosphorylation of N-acetyl-L-glutamate. This Pyropia yezoensis (Susabi-nori) protein is Acetylglutamate kinase.